Here is a 90-residue protein sequence, read N- to C-terminus: ATP synthase subunit e, mitochondrial (90 aa).

N-acetylserine is present on S2. A helical membrane pass occupies residues 7–23 (VLRWSALGAGVVYGFVH).

As to quaternary structure, F-type ATP synthases have 2 components, the catalytic core F(1) and the membrane-embedded component F(0), linked together by a central stalk and a peripheral stalk. The central stalk, also called rotor shaft, is often seen as part of F(1). The peripheral stalk is seen as part of F(0). F(0) contains the membrane channel next to the rotor. F-type ATP synthases form dimers but each monomer functions independently in ATP generation. The dimer consists of 17 different polypeptides: ATP1 (subunit alpha, 3 molecules per monomer, part of F(1)), ATP2 (subunit beta, 3 copies per monomer, part of F(1)), ATP3 (subunit gamma, part of the central stalk), ATP4 (subunit b, part of the peripheral stalk), ATP5/OSCP (subunit 5/OSCP, part of the peripheral stalk), ATP6 (subunit a, part of the peripheral stalk), ATP7 (subunit d, part of the peripheral stalk), ATP8 (subunit 8, part of the peripheral stalk), OLI1 (subunit c, part of the rotor, 10 molecules per monomer), ATP14 (subunit h, part of the peripheral stalk), ATP15 (subunit epsilon, part of the central stalk), ATP16 (subunit delta, part of the central stalk), ATP17 (subunit f, part of the peripheral stalk), ATP18 (subunit i/j, part of the peripheral stalk), ATP19 (subunit k, dimer-specific, at interface between monomers), ATP20 (subunit g, at interface between monomers), TIM11 (subunit e, at interface between monomers).

It is found in the mitochondrion inner membrane. Mitochondrial membrane ATP synthase (F(1)F(0) ATP synthase or Complex V) produces ATP from ADP in the presence of a proton gradient across the membrane which is generated by electron transport complexes of the respiratory chain. F-type ATP synthases consist of two structural domains, F(1) - containing the extramembraneous catalytic core, and F(0) - containing the membrane proton channel, linked together by a central stalk and a peripheral stalk. During catalysis, ATP synthesis in the catalytic domain of F(1) is coupled via a rotary mechanism of the central stalk subunits to proton translocation. Part of the complex F(0) domain. Minor subunit located with subunit a/ATP6 in the membrane. Together with subunit g/ATP20, probably contributes to membrane curvature at the site of the ATP synthase dimer, ultimately contributing to formation of cristae. The chain is ATP synthase subunit e, mitochondrial from Yarrowia lipolytica (strain CLIB 122 / E 150) (Yeast).